The primary structure comprises 147 residues: Transcriptional repressor NrdR (147 aa).

A zinc finger spans residues 3–34 (CPFCGHLETQVVETRVSEDADFVRRRRQCSAC). The region spanning 49-139 (PVVVKKDGSR…VYRSFEDVDE (91 aa)) is the ATP-cone domain.

The protein belongs to the NrdR family. Requires Zn(2+) as cofactor.

Functionally, negatively regulates transcription of bacterial ribonucleotide reductase nrd genes and operons by binding to NrdR-boxes. The chain is Transcriptional repressor NrdR from Variovorax paradoxus (strain S110).